Reading from the N-terminus, the 100-residue chain is Small ribosomal subunit protein uS14c (100 aa).

This sequence belongs to the universal ribosomal protein uS14 family. Part of the 30S ribosomal subunit.

It is found in the plastid. The protein localises to the chloroplast. Its function is as follows. Binds 16S rRNA, required for the assembly of 30S particles. The chain is Small ribosomal subunit protein uS14c from Oltmannsiellopsis viridis (Marine flagellate).